Here is an 860-residue protein sequence, read N- to C-terminus: Endo-1,4-beta-xylanase B (860 aa).

The N-terminal stretch at 1–20 (MKFSSANKILFSGLVASANA) is a signal peptide. A GH10 domain is found at 21 to 324 (YDLLKDYAGD…KPVYNTLLNI (304 aa)). The active-site Proton donor is the E144. The active-site Nucleophile is the E255. C278 and C284 form a disulfide bridge. N295, N309, N359, and N374 each carry an N-linked (GlcNAc...) asparagine glycan. Polar residues-rich tracts occupy residues 330–362 (RPAS…NKSK) and 371–418 (LPGN…NSKT). The tract at residues 330–793 (RPASSSAKTL…TKTLPGGACK (464 aa)) is disordered. The stretch at 375–382 (KSKTLPGG) is repeat 1. Positions 375–782 (KSKTLPGGNS…GGKSKTLPGG (408 aa)) are 47 X 8 AA tandem repeats of [SKN]-S-K-T-L-P-G-G. An N-linked (GlcNAc...) asparagine glycan is attached at N390. Residues 391-398 (KSKTLPGG) form repeat 2. An N-linked (GlcNAc...) asparagine glycan is attached at N406. Tandem repeats lie at residues 415-422 (NSKTLPGG), 431-438 (NSKTLPGG), 439-446 (KSKTLPGG), 447-454 (NSKTLPGG), 455-462 (KSKTLPGG), 463-470 (NSKTLPGG), 471-478 (SSKTLPGG), 479-486 (KSKTLPGG), 487-494 (NSKTLPGG), 495-502 (SSKTLPGG), 503-510 (KSKTLPGG), 511-518 (SSKTLPGG), 519-526 (KSKTLPGG), 527-534 (NSKTLPGG), 535-542 (NSKTLPGG), 543-550 (SSKTLPGG), 551-558 (KSKTLPGG), 559-566 (NSKTLPGG), 567-574 (SSKTLPGG), 575-582 (KSKTLPGG), 583-590 (NSKTLPGG), 591-598 (NSKTLPGG), 599-606 (KSKTLPGG), 607-614 (NSKTLPGG), 615-622 (SSKTLPGG), 623-630 (KSKTLPGG), 631-638 (SSKTLPGG), 639-646 (KSKTLPGG), 647-654 (NSKTLPGG), 655-662 (NSKTLPGG), 663-670 (SSKTLPGG), 671-678 (KSKTLPGG), 679-686 (SSKTLPGG), 687-694 (KSKTLPGG), 695-702 (NSKTLPGG), 703-710 (KSKTLPGG), 711-718 (NSKTLPGG), 719-726 (KSKTLPGG), 727-734 (NSKTLPGG), 735-742 (KSKTLPGG), 743-750 (NSKTLPGG), 751-758 (SSKTLPGG), 759-766 (KSKTLPGG), 767-774 (NSKTLPGG), and 775-782 (KSKTLPGG). 2 stretches are compositionally biased toward polar residues: residues 461 to 474 (GGNS…SSKT) and 485 to 498 (GGNS…SSKT). Composition is skewed to polar residues over residues 525–546 (GGNS…SSKT), 557–570 (GGNS…SSKT), 581–594 (GGNS…NSKT), and 605–618 (GGNS…SSKT). Residues 645-666 (GGNSKTLPGGNSKTLPGGSSKT) show a composition bias toward polar residues. Positions 741–754 (GGNSKTLPGGSSKT) are enriched in polar residues. The CBM1 domain occupies 824 to 860 (NCAAKWGQCGGNGFNGPTCCQNGSRCQFVNEWYSQCL). N-linked (GlcNAc...) asparagine glycosylation occurs at N845.

Belongs to the glycosyl hydrolase 10 (cellulase F) family.

The protein localises to the secreted. It catalyses the reaction Endohydrolysis of (1-&gt;4)-beta-D-xylosidic linkages in xylans.. It functions in the pathway glycan degradation; xylan degradation. Functionally, endo-1,4-beta-xylanase involved in the hydrolysis of xylan, a major structural heterogeneous polysaccharide found in plant biomass representing the second most abundant polysaccharide in the biosphere, after cellulose. Hydrolyzes both unsubstituted (oat spelts) and highly substituted (rye and wheat) forms of arabinoxylanslans. The polypeptide is Endo-1,4-beta-xylanase B (xynB) (Neocallimastix patriciarum (Rumen fungus)).